The chain runs to 266 residues: Killer cell lectin-like receptor 3 (266 aa).

Residues 1-48 (MSEPEVTYSTVRLHKSSGLQKLVRHEETQGPREVGNRKCSAPWQLIVK) are Cytoplasmic-facing. Residues 49-69 (ALGILCFLLLVTVAVLAVKIF) form a helical; Signal-anchor for type II membrane protein membrane-spanning segment. The Extracellular portion of the chain corresponds to 70 to 266 (QYNQHKQEIN…CGKKLDKFPD (197 aa)). N79, N87, N104, and N113 each carry an N-linked (GlcNAc...) asparagine glycan. The tract at residues 147–151 (WFCYS) is involved in dimerization. A disulfide bond links C149 and C154. The 109-residue stretch at 150-258 (YSTKCYYFIM…CNIPYYCICG (109 aa)) folds into the C-type lectin domain. The N-linked (GlcNAc...) asparagine glycan is linked to N160. Implicated in MHC class I binding stretches follow at residues 160-162 (NKT), 195-196 (IP), 207-208 (KK), 224-233 (MKIRKMNFKS), and 240-245 (SKARIE). 3 disulfides stabilise this stretch: C167-C255, C171-C257, and C236-C249.

As to quaternary structure, homodimer; disulfide-linked.

It localises to the membrane. Receptor on natural killer (NK) cells for class I MHC. The chain is Killer cell lectin-like receptor 3 (Klra3) from Mus musculus (Mouse).